The sequence spans 280 residues: Dopamine receptor-interacting protein 1 (280 aa).

In terms of assembly, interacts with DRD1, the dopamine D1 receptor.

Its function is as follows. Could be a regulator of the dopamine receptor signaling pathway. The polypeptide is Dopamine receptor-interacting protein 1 (DORIP1) (Bos taurus (Bovine)).